The chain runs to 402 residues: uncharacterized protein (402 aa).

The next 9 helical transmembrane spans lie at 13 to 33 (IGVLDVLRGMAIFGILFVNLA), 68 to 88 (FFIQTKCILLFSFLFGFGMVV), 108 to 128 (LMALLLFGTIHAFLIWDGDIL), 149 to 169 (LLIWAVSLYLLFSIPFMLTSF), 223 to 243 (LNYFFASIPYFSMFLLGAAAA), 261 to 281 (LWMAGLVIGIGAQVLYSVTDK), 283 to 303 (ICLLIGAPFLMFFYVTTVVYL), 327 to 347 (YLMQSIVCTWIFYHYGLGLYG), and 353 to 373 (AGVLITIAVCAVQMVFSHLWL).

Its subcellular location is the cell membrane. In terms of biological role, involved in transport. This is an uncharacterized protein from Bacillus subtilis (strain 168).